Here is a 679-residue protein sequence, read N- to C-terminus: Transketolase (679 aa).

His30 lines the substrate pocket. Residues His69 and 116 to 118 (GPL) each bind thiamine diphosphate. Asp157 contributes to the Mg(2+) binding site. Thiamine diphosphate-binding residues include Gly158 and Asn187. Mg(2+) is bound by residues Asn187 and Ile189. His262, Arg358, and Ser385 together coordinate substrate. Position 262 (His262) interacts with thiamine diphosphate. Thiamine diphosphate-binding residues include Glu417 and Phe444. The active-site Proton donor is the Glu417. Residues His468, Asp476, and Arg527 each coordinate substrate.

Belongs to the transketolase family. As to quaternary structure, homodimer. Mg(2+) is required as a cofactor. Ca(2+) serves as cofactor. It depends on Mn(2+) as a cofactor. Requires Co(2+) as cofactor. The cofactor is thiamine diphosphate.

It carries out the reaction D-sedoheptulose 7-phosphate + D-glyceraldehyde 3-phosphate = aldehydo-D-ribose 5-phosphate + D-xylulose 5-phosphate. Functionally, catalyzes the transfer of a two-carbon ketol group from a ketose donor to an aldose acceptor, via a covalent intermediate with the cofactor thiamine pyrophosphate. This is Transketolase (TKL1) from Kluyveromyces lactis (strain ATCC 8585 / CBS 2359 / DSM 70799 / NBRC 1267 / NRRL Y-1140 / WM37) (Yeast).